Reading from the N-terminus, the 164-residue chain is Cilia- and flagella-associated protein 20 (164 aa).

The protein belongs to the CFAP20 family. In terms of assembly, microtubule inner protein component of sperm flagellar doublet microtubules.

It is found in the nucleus. The protein localises to the cytoplasm. The protein resides in the cytoskeleton. Its subcellular location is the microtubule organizing center. It localises to the centrosome. It is found in the centriole. The protein localises to the cilium basal body. The protein resides in the cilium axoneme. Its subcellular location is the flagellum axoneme. Functionally, cilium- and flagellum-specific protein that plays a role in axonemal structure organization and motility. Microtubule inner protein (MIP) part of the dynein-decorated doublet microtubules (DMTs) in cilia axoneme, which is required for motile cilia beating. Involved in the regulation of the size and morphology of cilia. Required for axonemal microtubules polyglutamylation. The protein is Cilia- and flagella-associated protein 20 (Cfap20) of Rattus norvegicus (Rat).